The following is a 372-amino-acid chain: tRNA-specific 2-thiouridylase MnmA (372 aa).

Residues 16-23 and M42 each bind ATP; that span reads GMSGGVDS. An interaction with target base in tRNA region spans residues 102–104; that stretch reads NPD. The Nucleophile role is filled by C107. An intrachain disulfide couples C107 to C205. Position 132 (G132) interacts with ATP. The segment at 155 to 157 is interaction with tRNA; it reads KDQ. C205 (cysteine persulfide intermediate) is an active-site residue. The interaction with tRNA stretch occupies residues 317-318; that stretch reads RY.

The protein belongs to the MnmA/TRMU family.

The protein localises to the cytoplasm. It carries out the reaction S-sulfanyl-L-cysteinyl-[protein] + uridine(34) in tRNA + AH2 + ATP = 2-thiouridine(34) in tRNA + L-cysteinyl-[protein] + A + AMP + diphosphate + H(+). Catalyzes the 2-thiolation of uridine at the wobble position (U34) of tRNA, leading to the formation of s(2)U34. This is tRNA-specific 2-thiouridylase MnmA from Shewanella baltica (strain OS195).